A 1323-amino-acid chain; its full sequence is MANVEKPNDCSGFPVVDLNSCFSNGFNNEKQEIEMETDDSPILLMSSSASRENSNTFSVIQRTPDGKIITTNNNMNSKINKQLDKLPENLRLNGRTPSGKLRSFVCEVCTRAFARQEHLKRHYRSHTNEKPYPCGLCNRCFTRRDLLIRHAQKIHSGNLGETISHTKKVSRTITKARKNSASSVKFQTPTYGTPDNGNFLNRTTANTRRKASPEANVKRKYLKKLTRRASFSAQSASSYALPDQSSLEQHPKDRVKFSTPELVPLDLKNPELDSSFDLNMNLDLNLNLDSNFNIALNRSDSSGSTMNLDYKLPESANNYTYSSGSPTRAYVGANTNSKNASFNDADLLSSSYWIKAYNDHLFSVSESDETSPMNSELNDTKLIVPDFKSTIHHLKDSRSSSWTVAIDNNSNNNKVSDNQPDFVDFQELLDNDTLGNDLLETTAVLKEFELLHDDSVSATATSNEIDLSHLNLSNSPISPHKLIYKNKEGTNDDMLISFGLDHPSNREDDLDKLCNMTRDVQAIFSQYLKGEESKRSLEDFLSTSNRKEKPDSGNYTFYGLDCLTLSKISRALPASTVNNNQPSHSIESKLFNEPMRNMCIKVLRYYEKFSHDSSESVMDSNPNLLSKELLMPAVSELNEYLDLFKNNFLPHFPIIHPSLLDLDLDSLQRYTNEDGYDDAENAQLFDRLSQGTDKEYDYEHYQILSISKIVCLPLFMATFGSLHKFGYKSQTIELYEMSRRILHSFLETKRRCRSTTVNDSYQNIWLMQSLILSFMFALVADYLEKIDSSLMKRQLSALCSTIRSNCLPTISANSEKSINNNNEPLTFGSPLQYIIFESKIRCTLMAYDFCQFLKCFFHIKFDLSIKEKDVETIYIPDNESKWASESIICNGHVVQKQNFYDFRNFYYSFTYGHLHSIPEFLGSSMIYYEYDLRKGTKSHVFLDRIDTKRLERSLDTSSYGNDNMAATNKNIAILIDDTIILKNNLMSMRFIKQIDRSFTEKVRKGQIAKIYDSFLNSVRLNFLKNYSVEVLCEFLVALNFSIRNISSLYVEEESDCSQRMNSPELPRIHLNNQALSVFNLQGYYYCFILIIKFLLDFEATPNFKLLRIFIELRSLANSILLPTLSRLYPQEFSGFPDVVFTQQFINKDNGMLVPGLSANEHHNGASAAVKTKLAKKINVEGLAMFINEILVNSFNDTSFLNMEDPIRNEFSFDNGDRAVTDLPRSAHFLSDTGLEGINFSGLNDSHQTVSTLNLLRYGENHSSKHKNGGKGQGFAEKYQLSLKYVTIAKLFFTNVKENYIHCHMLDKMASDFHTLENHLKGNS.

Residue S54 is modified to Phosphoserine. 2 C2H2-type zinc fingers span residues F104–H126 and Y132–H155. Positions K175–N216 are disordered. Positions N179–N206 are enriched in polar residues. T188 and T193 each carry phosphothreonine. S230 carries the phosphoserine; by PKA; in vitro modification. S258 bears the Phosphoserine mark. Phosphothreonine is present on T259. Phosphoserine is present on residues S299, S323, and S325. T327 bears the Phosphothreonine mark.

In terms of processing, phosphorylation at Ser-230 by cAMP-dependent protein kinase A does not affect DNA binding but appears to prevent transcription of ADH2 during glucose repression.

The protein localises to the nucleus. Functionally, required for transcriptional activation of glucose-repressible alcohol dehydrogenase (ADH2). The polypeptide is Regulatory protein ADR1 (ADR1) (Saccharomyces cerevisiae (strain ATCC 204508 / S288c) (Baker's yeast)).